Consider the following 276-residue polypeptide: Glutamate 5-kinase (276 aa).

Lysine 14 lines the ATP pocket. Substrate contacts are provided by serine 54, aspartate 141, and asparagine 157. ATP is bound by residues 177-178 (SD) and 219-225 (TGGMLTK).

This sequence belongs to the glutamate 5-kinase family.

The protein resides in the cytoplasm. It carries out the reaction L-glutamate + ATP = L-glutamyl 5-phosphate + ADP. It participates in amino-acid biosynthesis; L-proline biosynthesis; L-glutamate 5-semialdehyde from L-glutamate: step 1/2. Its function is as follows. Catalyzes the transfer of a phosphate group to glutamate to form L-glutamate 5-phosphate. This Listeria welshimeri serovar 6b (strain ATCC 35897 / DSM 20650 / CCUG 15529 / CIP 8149 / NCTC 11857 / SLCC 5334 / V8) protein is Glutamate 5-kinase.